A 161-amino-acid chain; its full sequence is Probable calcium-binding protein CML16 (161 aa).

EF-hand domains follow at residues 8–43 (DQIK…LGIK), 44–79 (PRGD…DINE), 83–118 (INQE…MGHP), and 119–154 (LTYR…SAAD). Ca(2+) is bound by residues aspartate 21, aspartate 23, aspartate 25, serine 27, glutamate 32, aspartate 57, asparagine 59, asparagine 61, serine 63, glutamate 68, aspartate 96, aspartate 98, asparagine 100, serine 102, glutamate 107, aspartate 132, asparagine 134, aspartate 136, and glutamate 143.

In terms of biological role, potential calcium sensor. This Arabidopsis thaliana (Mouse-ear cress) protein is Probable calcium-binding protein CML16 (CML16).